A 378-amino-acid polypeptide reads, in one-letter code: Odorant receptor 45a (378 aa).

Residues 1–30 (MDASYFAVQRRALEIVGFDPSTPQLSLKHP) lie on the Cytoplasmic side of the membrane. The chain crosses the membrane as a helical span at residues 31–51 (IWAGILILSLISHNWPMVVYA). The Extracellular portion of the chain corresponds to 52–129 (LQDLSDLTRL…RYVARSFRNA (78 aa)). The helical transmembrane segment at 130–150 (AYGVICASAIAPMLLGLWGYV) threads the bilayer. Residues 151–173 (ETGVFTPTTPMEFNFWLDERKPH) lie on the Cytoplasmic side of the membrane. Residues 174–194 (FYWPIYVWGVLGVAAAAWLAI) form a helical membrane-spanning segment. Topologically, residues 195–197 (ATD) are extracellular. The chain crosses the membrane as a helical span at residues 198–218 (TLFSWLTHNVVIQFQLLELVL). Residues 219–249 (EEKDLNGGDSRLTGFVSRHRIALDLAKELSS) lie on the Cytoplasmic side of the membrane. The helical transmembrane segment at 250 to 270 (IFGEIVFVKYMLSYLQLCMLA) threads the bilayer. The Extracellular portion of the chain corresponds to 271-285 (FRFSRSGWSAQVPFR). The chain crosses the membrane as a helical span at residues 286–306 (ATFLVAIIIQLSSYCYGGEYI). At 307–342 (KQQSLAIAQAVYGQINWPEMTPKKRRLWQMVIMRAQ) the chain is on the cytoplasmic side. Residues 343–363 (RPAKIFGFMFVVDLPLLLWVI) traverse the membrane as a helical segment. Residues 364 to 378 (RTAGSFLAMLRTFER) are Extracellular-facing.

It belongs to the insect chemoreceptor superfamily. Heteromeric odorant receptor channel (TC 1.A.69) family. Or1a subfamily. Interacts with Orco. Complexes exist early in the endomembrane system in olfactory sensory neurons (OSNs), coupling these complexes to the conserved ciliary trafficking pathway.

The protein resides in the cell membrane. Functionally, odorant receptor which mediates acceptance or avoidance behavior, depending on its substrates. The odorant receptor repertoire encodes a large collection of odor stimuli that vary widely in identity, intensity, and duration. May form a complex with Orco to form odorant-sensing units, providing sensitive and prolonged odorant signaling and calcium permeability. Involved in the behavioral responses to hexanol, pentyl acetate, benzyl acetate, and 2-heptanone. The protein is Odorant receptor 45a (Or45a) of Drosophila melanogaster (Fruit fly).